A 285-amino-acid chain; its full sequence is Putative alkaline ceramidase dcd3B (285 aa).

Helical transmembrane passes span Thr-34–Ala-54, Val-77–Thr-97, and Leu-104–Ile-124. N-linked (GlcNAc...) asparagine glycosylation is present at Asn-131. Transmembrane regions (helical) follow at residues Arg-141–Ile-161, Ile-166–Tyr-186, Pro-200–Thr-220, and Leu-236–Ile-256.

Belongs to the alkaline ceramidase family.

It is found in the membrane. In Dictyostelium discoideum (Social amoeba), this protein is Putative alkaline ceramidase dcd3B (dcd3B).